The following is a 191-amino-acid chain: MDLPEPIRRRLGDFSRTVFVDQSRTQPSFEEHANFLDQNKDVVSSLPLQMSLYFNMWFFPFWWISEVVMLDLKYSALADYYKFILITILIVMTLIEAIRLYLGNAGNLQEKVPELAGFWLLTFLLQFPLILFQLFNEAVLVQPLERGVHIILALFIFAEVLFGFVALRTMVRHTESRFHLRQFHGIQELRT.

A run of 4 helical transmembrane segments spans residues 50 to 70 (MSLY…VVML), 83 to 103 (FILI…LYLG), 115 to 135 (LAGF…FQLF), and 147 to 167 (GVHI…FVAL).

The protein belongs to the TMEM17 family. In terms of assembly, part of the tectonic-like complex (also named B9 complex).

The protein resides in the cell projection. The protein localises to the cilium membrane. Its function is as follows. Transmembrane component of the tectonic-like complex, a complex localized at the transition zone of primary cilia and acting as a barrier that prevents diffusion of transmembrane proteins between the cilia and plasma membranes. Required for ciliogenesis and sonic hedgehog/SHH signaling. The polypeptide is Transmembrane protein 17B (Tmem17b) (Danio rerio (Zebrafish)).